The sequence spans 447 residues: Dihydrolipoyllysine-residue acetyltransferase component of pyruvate dehydrogenase complex (447 aa).

Residues 2–78 enclose the Lipoyl-binding domain; the sequence is PINITMPALS…KVNALIAVLA (77 aa). N6-lipoyllysine is present on Lys-43. The disordered stretch occupies residues 91 to 140; the sequence is GNGAAGAVPAPKPKETAETAPAAAPAPAAAPAPQAAAPASPAPADGEGKR. Residues 108-134 show a composition bias toward low complexity; sequence ETAPAAAPAPAAAPAPQAAAPASPAPA. Residues 142-179 form the Peripheral subunit-binding (PSBD) domain; it reads FSSPLARRLAKEAGIDLSAIAGSGPHGRVVKKDVETAV. His-420 is a catalytic residue.

This sequence belongs to the 2-oxoacid dehydrogenase family. As to quaternary structure, forms a 24-polypeptide structural core with octahedral symmetry. Requires (R)-lipoate as cofactor.

It carries out the reaction N(6)-[(R)-dihydrolipoyl]-L-lysyl-[protein] + acetyl-CoA = N(6)-[(R)-S(8)-acetyldihydrolipoyl]-L-lysyl-[protein] + CoA. The pyruvate dehydrogenase complex catalyzes the overall conversion of pyruvate to acetyl-CoA and CO(2). It contains multiple copies of three enzymatic components: pyruvate dehydrogenase (E1), dihydrolipoamide acetyltransferase (E2) and lipoamide dehydrogenase (E3). The sequence is that of Dihydrolipoyllysine-residue acetyltransferase component of pyruvate dehydrogenase complex (pdhC) from Rhizobium meliloti (strain 1021) (Ensifer meliloti).